The following is a 250-amino-acid chain: Diphthine synthase (250 aa).

Residues L9, D85, V88, 113–114 (SI), L165, A202, and H227 each bind S-adenosyl-L-methionine.

Belongs to the diphthine synthase family. In terms of assembly, homodimer.

The catalysed reaction is 2-[(3S)-amino-3-carboxypropyl]-L-histidyl-[translation elongation factor 2] + 3 S-adenosyl-L-methionine = diphthine-[translation elongation factor 2] + 3 S-adenosyl-L-homocysteine + 3 H(+). It participates in protein modification; peptidyl-diphthamide biosynthesis. Its function is as follows. S-adenosyl-L-methionine-dependent methyltransferase that catalyzes the trimethylation of the amino group of the modified target histidine residue in translation elongation factor 2 (EF-2), to form an intermediate called diphthine. The three successive methylation reactions represent the second step of diphthamide biosynthesis. In Methanoregula boonei (strain DSM 21154 / JCM 14090 / 6A8), this protein is Diphthine synthase.